An 876-amino-acid polypeptide reads, in one-letter code: Aspartate--tRNA(Asp/Asn) ligase (876 aa).

The unknown stretch occupies residues 1–278 (MAATDTPWRP…FGFKRAYEGF (278 aa)). Residues 279-876 (MHVYRSHTCG…PKPKKEVKEG (598 aa)) are aspartyl-tRNA synthetase. Glu-453 serves as a coordination point for L-aspartate. Positions 477 to 480 (QQFK) are aspartate. Positions 499 and 729 each coordinate L-aspartate. 499-501 (RDE) contributes to the ATP binding site. Glu-763 contributes to the ATP binding site. Arg-770 contacts L-aspartate. 815–818 (GVDR) is an ATP binding site.

It belongs to the class-II aminoacyl-tRNA synthetase family. Type 1 subfamily. In terms of assembly, homodimer.

Its subcellular location is the cytoplasm. It catalyses the reaction tRNA(Asx) + L-aspartate + ATP = L-aspartyl-tRNA(Asx) + AMP + diphosphate. Functionally, aspartyl-tRNA synthetase with relaxed tRNA specificity since it is able to aspartylate not only its cognate tRNA(Asp) but also tRNA(Asn). Reaction proceeds in two steps: L-aspartate is first activated by ATP to form Asp-AMP and then transferred to the acceptor end of tRNA(Asp/Asn). This is Aspartate--tRNA(Asp/Asn) ligase (aspS) from Paramagnetospirillum magneticum (strain ATCC 700264 / AMB-1) (Magnetospirillum magneticum).